A 188-amino-acid chain; its full sequence is MSSKLLSMKFMQRARGIDPKQAEEELSKNIVTDEHWSLAGKVDFLPQKMTRNVEYESGYGGLIEENDLESHSNEPNLVQGRASFGLFNKELGEENVDEKDVSKNEEVDVNGTKITDTSELTERERRKQELVSKKAEASRKMEVKAPAKESKKRKVNELSQDVISLHSPKESNARKTKKNKNKKKKKRN.

A disordered region spans residues 93 to 188; that stretch reads EENVDEKDVS…NKNKKKKKRN (96 aa). Positions 120–149 are enriched in basic and acidic residues; it reads LTERERRKQELVSKKAEASRKMEVKAPAKE. S167 carries the post-translational modification Phosphoserine. The segment covering 174-188 has biased composition (basic residues); it reads RKTKKNKNKKKKKRN.

The protein belongs to the MPP6 family. Associates with the RNA exosome complex.

The protein resides in the nucleus. Its function is as follows. RNA-binding protein that associates with the RNA exosome complex. This chain is M-phase phosphoprotein 6 homolog, found in Schizosaccharomyces pombe (strain 972 / ATCC 24843) (Fission yeast).